Reading from the N-terminus, the 744-residue chain is Protein zyg-11 homolog B (744 aa).

LRR repeat units lie at residues 185–208, 216–236, and 237–261; these read LPRLESLDISNTSITDITALLACK, MHHLKCLKMTTTQILDVVREL, and KHLNHLDISDDKQFTSDIALRLLEQ.

This sequence belongs to the zyg-11 family. As to quaternary structure, (Microbial infection) Interacts with SARS-COV-2 protein ORF10. Interacts with ELOC/Elongin C. Part of an E3 ubiquitin ligase complex including ZYG11B, CUL2 and Elongin BC. Post-translationally, (Microbial infection) Ubiquitinated; leading to proteasomal degradation in the presence of herpes simplex virus 1/HHV-1.

Its subcellular location is the cytoplasm. Functionally, serves as substrate adapter subunit in the E3 ubiquitin ligase complex ZYG11B-CUL2-Elongin BC. Acts to target substrates bearing N-terminal degrons for proteasomal degradation with the first four residues of substrates being the key recognition elements. Prefers Nt-Gly but also has the capacity to recognize Nt-Ser, -Ala and -Cys. Involved in the clearance of proteolytic fragments generated by caspase cleavage during apoptosis since N-terminal glycine degrons are strongly enriched at caspase cleavage sites. Also important in the quality control of protein N-myristoylation in which N-terminal glycine degrons are conditionally exposed after a failure of N-myristoylation. In addition, plays a role in the amplification of cGAS to enhance innate immune response. Mechanistically, strengthens the processes of cGAS binding with dsDNA and assembling oligomers and also accelerates and stabilizes cGAS-DNA condensation, thereby enhancing production of antiviral IFNs and inflammatory cytokines. This chain is Protein zyg-11 homolog B, found in Homo sapiens (Human).